Reading from the N-terminus, the 90-residue chain is UPF0335 protein Smed_2680 (90 aa).

The protein belongs to the UPF0335 family.

In Sinorhizobium medicae (strain WSM419) (Ensifer medicae), this protein is UPF0335 protein Smed_2680.